The sequence spans 382 residues: MKALHFGAGNIGRGFIGKLLADAGIELTFADVNQTVLDALNARHSYQVHVVGENEQVDTVSGVNAVSSIGDEVVDLIAEVDLVTTAVGPVVLERIAPAIAKGLAKRKAQGSERPLNIIACENMVRGTTQLKGHVFNALAEEDKAWVEAHIGFVDSAVDRIVPPSASATHDPLEVTVETFSEWIVDKTQFKGALPTIPGMELTDNLMAFVERKLFTLNTGHAITAYLGKLAGHQTIRDAILDEKIRAVVQGAMEESGAVLIKRYAFDPQKHAAYIQKILGRFENPYLKDDVERVGRQPLRKLSAGDRLIKPLLGTLEYGLPHRNLVKGIAAAMHFRSEDDPQAQELAALIADKGPQAALAQISGLDAASDVVAEAVNDYNAEK.

3-14 (ALHFGAGNIGRG) contacts NAD(+).

It belongs to the mannitol dehydrogenase family.

The enzyme catalyses D-mannitol 1-phosphate + NAD(+) = beta-D-fructose 6-phosphate + NADH + H(+). The protein is Mannitol-1-phosphate 5-dehydrogenase of Klebsiella pneumoniae (strain 342).